The chain runs to 420 residues: Gamma-glutamyl phosphate reductase (420 aa).

This sequence belongs to the gamma-glutamyl phosphate reductase family.

The protein localises to the cytoplasm. The catalysed reaction is L-glutamate 5-semialdehyde + phosphate + NADP(+) = L-glutamyl 5-phosphate + NADPH + H(+). Its pathway is amino-acid biosynthesis; L-proline biosynthesis; L-glutamate 5-semialdehyde from L-glutamate: step 2/2. Catalyzes the NADPH-dependent reduction of L-glutamate 5-phosphate into L-glutamate 5-semialdehyde and phosphate. The product spontaneously undergoes cyclization to form 1-pyrroline-5-carboxylate. In Streptococcus pneumoniae (strain Hungary19A-6), this protein is Gamma-glutamyl phosphate reductase.